Consider the following 118-residue polypeptide: Aspartate 1-decarboxylase (118 aa).

Ser-25 acts as the Schiff-base intermediate with substrate; via pyruvic acid in catalysis. A Pyruvic acid (Ser) modification is found at Ser-25. Thr-57 lines the substrate pocket. Tyr-58 serves as the catalytic Proton donor. 73–75 (GAA) contacts substrate.

Belongs to the PanD family. As to quaternary structure, heterooctamer of four alpha and four beta subunits. The cofactor is pyruvate. In terms of processing, is synthesized initially as an inactive proenzyme, which is activated by self-cleavage at a specific serine bond to produce a beta-subunit with a hydroxyl group at its C-terminus and an alpha-subunit with a pyruvoyl group at its N-terminus.

It localises to the cytoplasm. It carries out the reaction L-aspartate + H(+) = beta-alanine + CO2. The protein operates within cofactor biosynthesis; (R)-pantothenate biosynthesis; beta-alanine from L-aspartate: step 1/1. In terms of biological role, catalyzes the pyruvoyl-dependent decarboxylation of aspartate to produce beta-alanine. The sequence is that of Aspartate 1-decarboxylase from Phenylobacterium zucineum (strain HLK1).